The following is a 346-amino-acid chain: Serpentine receptor class gamma-20 (346 aa).

Transmembrane regions (helical) follow at residues 27–47 (VMLS…SAVL), 69–89 (FFVL…IEVL), 106–128 (PFFF…CLAF), 157–177 (ILAP…WNIL), 212–232 (IPCL…LTML), 254–274 (TMLF…LPGI), and 279–299 (LLIS…ALIL).

It belongs to the nematode receptor-like protein srg family.

It is found in the membrane. The chain is Serpentine receptor class gamma-20 (srg-20) from Caenorhabditis elegans.